The chain runs to 513 residues: rRNA N(6)-adenosine-methyltransferase ZCCHC4 (513 aa).

Positions 40, 42, 64, 73, 125, 128, 140, and 143 each coordinate Zn(2+). Residues 40–82 form a GRF-type zinc finger; sequence CPHGPTLLFVKVTQGKEETRRFYACSACRDRKDCNFFQWEDEK. S-adenosyl-L-methionine is bound by residues 172–175, Arg202, Asp225, 243–244, and Asp276; these read QYLF and NM. Residues 337-357 form a regulatory loop region; sequence QVDYDNHALYKHGKTGRKQSP. Residues Cys380, Cys383, His393, Cys394, Cys397, Cys400, His410, Cys411, Cys414, Cys417, His424, Cys425, Cys428, Cys431, His436, and Cys438 each contribute to the Zn(2+) site. Positions 395–447 constitute a DHHC domain; it reads ELCNSCTSKDGRKWNHCFLCKKCVKPSWIHCSICNHCAVPDHSCEGPKHGCFI. The segment at 443–460 adopts a CCHC-type zinc-finger fold; it reads HGCFICGELDHKRSTCPN. Positions 466–481 are enriched in basic residues; sequence RANKAVRKQKQRKSNK. Positions 466-513 are disordered; that stretch reads RANKAVRKQKQRKSNKMKMETTKGQSMNHTSATRRKKRRERAHQYLGS. Positions 487–496 are enriched in polar residues; it reads TKGQSMNHTS. Positions 497–506 are enriched in basic residues; the sequence is ATRRKKRRER.

It belongs to the ZCCHC4 family. As to quaternary structure, interacts with components of the ASC-1 complex TRIP4, ASCC1, ASCC2 and ASCC3. Interact with AHCYL1 and AHCYL2. Interact with YTHDC2.

It localises to the nucleus. It is found in the nucleolus. The protein localises to the cytoplasm. The catalysed reaction is adenosine(4220) in 28S rRNA + S-adenosyl-L-methionine = N(6)-methyladenosine(4220) in 28S rRNA + S-adenosyl-L-homocysteine + H(+). Its function is as follows. rRNA N6-methyltransferase that specifically methylates the adenine in position 4220 of 28S rRNA. N6-methylation of adenine(4220) in 28S rRNA is required for translation. The polypeptide is rRNA N(6)-adenosine-methyltransferase ZCCHC4 (Homo sapiens (Human)).